Here is a 120-residue protein sequence, read N- to C-terminus: Large ribosomal subunit protein uL18c (120 aa).

This sequence belongs to the universal ribosomal protein uL18 family. In terms of assembly, part of the 50S ribosomal subunit; contacts the 5S rRNA.

Its subcellular location is the plastid. The protein localises to the chloroplast. Functionally, binds 5S rRNA, forms part of the central protuberance of the 50S subunit. This is Large ribosomal subunit protein uL18c (rpl18) from Porphyra purpurea (Red seaweed).